Here is a 347-residue protein sequence, read N- to C-terminus: Heat-inducible transcription repressor HrcA (347 aa).

The protein belongs to the HrcA family.

Functionally, negative regulator of class I heat shock genes (grpE-dnaK-dnaJ and groELS operons). Prevents heat-shock induction of these operons. The chain is Heat-inducible transcription repressor HrcA from Sphingopyxis alaskensis (strain DSM 13593 / LMG 18877 / RB2256) (Sphingomonas alaskensis).